A 228-amino-acid polypeptide reads, in one-letter code: GrpE protein homolog, mitochondrial (228 aa).

The segment covering 46 to 57 (DEAKSEESKENN) has biased composition (basic and acidic residues). Residues 46–66 (DEAKSEESKENNEDLTEEQSE) form a disordered region.

Belongs to the GrpE family. As to quaternary structure, component of the PAM complex, at least composed of SSC1 (mtHsp70), MGE1, TIM44, PAM16/TIM16, PAM17 and PAM18/TIM14. Interacts with SSQ1. Post-translationally, the N-terminus is blocked.

The protein resides in the mitochondrion matrix. Essential component of the PAM complex, a complex required for the translocation of transit peptide-containing proteins from the inner membrane into the mitochondrial matrix in an ATP-dependent manner. Seems to control the nucleotide-dependent binding of SSC1 to substrate proteins and the association of SSC1 with TIM44. The sequence is that of GrpE protein homolog, mitochondrial (MGE1) from Saccharomyces cerevisiae (strain ATCC 204508 / S288c) (Baker's yeast).